Here is a 75-residue protein sequence, read N- to C-terminus: Movement protein TGBp3 (75 aa).

Topologically, residues 1–2 are lumenal; the sequence is MR. The chain crosses the membrane as a helical span at residues 3–23; it reads VLDLILALITAAVVGYTIALV. Residues 24–75 lie on the Cytoplasmic side of the membrane; it reads SNSGCYVHFDGRSATTTCPPGPWVESIANGLYTAGLARPHPEPECERRQSSW.

This sequence belongs to the Tymovirales TGBp3 protein family.

The protein resides in the host endoplasmic reticulum membrane. Functionally, plays a role in viral cell-to-cell propagation, by facilitating genome transport to neighboring plant cells through plasmosdesmata. May induce the formation of granular vesicles derived from the Endoplasmic reticulum, which align on actin filaments. This Strawberry mild yellow edge-associated virus (SMYEaV) protein is Movement protein TGBp3.